The primary structure comprises 504 residues: uncharacterized protein (504 aa).

The interval 36–60 (TAFRMEKEQRLPSQNKPPRGRRRPD) is disordered. An Integrase catalytic domain is found at 125–309 (QTHEPGRLGL…RPHLQVLPER (185 aa)).

This is an uncharacterized protein from Sinorhizobium fredii (strain NBRC 101917 / NGR234).